A 236-amino-acid chain; its full sequence is 2-C-methyl-D-erythritol 4-phosphate cytidylyltransferase (236 aa).

It belongs to the IspD/TarI cytidylyltransferase family. IspD subfamily. As to quaternary structure, homodimer.

The enzyme catalyses 2-C-methyl-D-erythritol 4-phosphate + CTP + H(+) = 4-CDP-2-C-methyl-D-erythritol + diphosphate. It participates in isoprenoid biosynthesis; isopentenyl diphosphate biosynthesis via DXP pathway; isopentenyl diphosphate from 1-deoxy-D-xylulose 5-phosphate: step 2/6. Functionally, catalyzes the formation of 4-diphosphocytidyl-2-C-methyl-D-erythritol from CTP and 2-C-methyl-D-erythritol 4-phosphate (MEP). The protein is 2-C-methyl-D-erythritol 4-phosphate cytidylyltransferase of Escherichia coli O157:H7.